The primary structure comprises 493 residues: Cysteine--tRNA ligase (493 aa).

C41 is a binding site for Zn(2+). The 'HIGH' region motif lies at 43-53; that stretch reads PTVYNYPHIGN. Positions 231, 256, and 260 each coordinate Zn(2+). The short motif at 296–300 is the 'KMSKS' region element; that stretch reads KMSKS. Residue K299 coordinates ATP.

The protein belongs to the class-I aminoacyl-tRNA synthetase family. Monomer. The cofactor is Zn(2+).

The protein resides in the cytoplasm. The enzyme catalyses tRNA(Cys) + L-cysteine + ATP = L-cysteinyl-tRNA(Cys) + AMP + diphosphate. This Novosphingobium aromaticivorans (strain ATCC 700278 / DSM 12444 / CCUG 56034 / CIP 105152 / NBRC 16084 / F199) protein is Cysteine--tRNA ligase.